The sequence spans 378 residues: Transmembrane 6 superfamily member 2 (378 aa).

The next 10 helical transmembrane spans lie at 10 to 30 (TVAM…VSAF), 34 to 54 (LFVV…VYSL), 63 to 83 (PLYA…VIAL), 110 to 130 (IFIC…MAGA), 140 to 160 (LGLY…PGNI), 170 to 190 (PTFF…VRIF), 219 to 239 (LALI…GLVV), 269 to 289 (MLMY…ALAF), 291 to 311 (GCSW…QAQF), and 332 to 352 (TWAT…LLAF). 2 EXPERA domains span residues 61–186 (YDPL…CWAG) and 217–351 (ADLA…HLLA).

Belongs to the TM6SF family. In terms of tissue distribution, highly expressed in the liver at both the mRNA and protein levels.

The protein resides in the endoplasmic reticulum membrane. Its subcellular location is the endoplasmic reticulum-Golgi intermediate compartment membrane. Its function is as follows. Regulator of liver fat metabolism influencing triglyceride secretion and hepatic lipid droplet content. May function as sterol isomerase. This chain is Transmembrane 6 superfamily member 2 (Tm6sf2), found in Mus musculus (Mouse).